The chain runs to 494 residues: NADPH:adrenodoxin oxidoreductase, mitochondrial (494 aa).

The N-terminal 34 residues, 1 to 34, are a transit peptide targeting the mitochondrion; the sequence is MAPRCWRWWSWSAWPGVRPLPSRSTPTPGFCKKF. FAD-binding residues include A51, E72, L80, and V116. NADP(+) contacts are provided by residues 187 to 190, 231 to 232, and E243; these read QGNV and RR. At S313 the chain carries Phosphoserine. Residues W401 and 408–410 each bind FAD; that span reads GVI. G408 provides a ligand contact to NADP(+).

This sequence belongs to the ferredoxin--NADP reductase type 1 family. As to quaternary structure, monomer. Interacts directly with FDX1. It depends on FAD as a cofactor.

It is found in the mitochondrion inner membrane. The enzyme catalyses 2 reduced [adrenodoxin] + NADP(+) + H(+) = 2 oxidized [adrenodoxin] + NADPH. The catalysed reaction is 2 reduced [2Fe-2S]-[ferredoxin] + NADP(+) + H(+) = 2 oxidized [2Fe-2S]-[ferredoxin] + NADPH. It participates in steroid metabolism; cholesterol metabolism. In terms of biological role, serves as the first electron transfer protein in all the mitochondrial P450 systems including cholesterol side chain cleavage in all steroidogenic tissues, steroid 11-beta hydroxylation in the adrenal cortex, 25-OH-vitamin D3-24 hydroxylation in the kidney, and sterol C-27 hydroxylation in the liver. Also acts as a ferredoxin--NADP(+) reductase essential for coenzyme Q biosynthesis: together with FDX2, transfers the electrons required for the hydroxylation reaction performed by COQ6. This Rattus norvegicus (Rat) protein is NADPH:adrenodoxin oxidoreductase, mitochondrial (Fdxr).